The sequence spans 513 residues: Xylose import ATP-binding protein XylG (513 aa).

2 consecutive ABC transporter domains span residues 5-242 (LEMK…VGRE) and 259-505 (LRVE…LRSE). ATP is bound at residue 37-44 (GENGSGKS).

It belongs to the ABC transporter superfamily. Xylose importer (TC 3.A.1.2.4) family. The complex is composed of two ATP-binding proteins (XylG), two transmembrane proteins (XylH) and a solute-binding protein (XylF).

The protein resides in the cell inner membrane. The enzyme catalyses D-xylose(out) + ATP + H2O = D-xylose(in) + ADP + phosphate + H(+). Functionally, part of the ABC transporter complex XylFGH involved in xylose import. Responsible for energy coupling to the transport system. The polypeptide is Xylose import ATP-binding protein XylG (Pectobacterium atrosepticum (strain SCRI 1043 / ATCC BAA-672) (Erwinia carotovora subsp. atroseptica)).